Reading from the N-terminus, the 466-residue chain is 3-isopropylmalate dehydratase large subunit (466 aa).

3 residues coordinate [4Fe-4S] cluster: Cys-347, Cys-407, and Cys-410.

Belongs to the aconitase/IPM isomerase family. LeuC type 1 subfamily. Heterodimer of LeuC and LeuD. It depends on [4Fe-4S] cluster as a cofactor.

The enzyme catalyses (2R,3S)-3-isopropylmalate = (2S)-2-isopropylmalate. The protein operates within amino-acid biosynthesis; L-leucine biosynthesis; L-leucine from 3-methyl-2-oxobutanoate: step 2/4. Functionally, catalyzes the isomerization between 2-isopropylmalate and 3-isopropylmalate, via the formation of 2-isopropylmaleate. The chain is 3-isopropylmalate dehydratase large subunit from Shewanella halifaxensis (strain HAW-EB4).